The primary structure comprises 357 residues: Inner membrane protein YcfT (357 aa).

The Cytoplasmic portion of the chain corresponds to 1 to 12 (MKQKELWINQIK). Residues 13–33 (GLCICLVVIYHSVITFYPHLT) traverse the membrane as a helical segment. Residues 34-49 (TFQHPLSEVLSKCWIY) are Periplasmic-facing. A helical transmembrane segment spans residues 50 to 70 (FNLYLAPFRMPVFFFISGYLI). At 71–86 (RRYIDSVPWGNCLDKR) the chain is on the cytoplasmic side. Residues 87–107 (IWNIFWVLALWGVVQWLALSA) form a helical membrane-spanning segment. The Periplasmic segment spans residues 108–135 (LNQWLAPERDLSNASNAAYADSTGEFLH). Residues 136–156 (GMITASTSLWYLYALIVYFVV) form a helical membrane-spanning segment. Topologically, residues 157-162 (CKIFSR) are cytoplasmic. Residues 163–183 (LALPLFALFVLLSVAVNFVPT) form a helical membrane-spanning segment. Residues 184–196 (PWWGMNSVIRNLP) are Periplasmic-facing. The helical transmembrane segment at 197-217 (YYSLGAWFGATIMTCVKEVPL) threads the bilayer. Residues 218–231 (RRHLLMASLLTVLA) are Cytoplasmic-facing. A helical membrane pass occupies residues 232–252 (VGAWLFTISLLLSLVSIVVIM). At 253 to 310 (KLFYQYEQRFGMRSTSLLNVIGSNTIAIYTTHRILVEIFSLTLLAQMNAARWSPQVEL) the chain is on the periplasmic side. A helical transmembrane segment spans residues 311–331 (TLLLVYPFVSLFICTVAGLLV). Topologically, residues 332 to 357 (RKLSQRAFSDLLFSPPSLPAAVSYSR) are cytoplasmic.

The protein belongs to the acyltransferase 3 family.

The protein localises to the cell inner membrane. In Escherichia coli (strain K12), this protein is Inner membrane protein YcfT (ycfT).